Here is a 507-residue protein sequence, read N- to C-terminus: Xaa-Pro aminopeptidase 3 (507 aa).

The transit peptide at 1–31 directs the protein to the mitochondrion; sequence MPWLLSAPKLVPAVANVRGLSGCMLCSQRRY. Positions 54 to 79 are interaction with TNFRSF1B; sequence HPHLLRPGEVTPGLSQVEYALRRHKL. The substrate site is built by tyrosine 300, aspartate 331, aspartate 342, histidine 424, histidine 431, glutamate 451, and glutamate 475. Aspartate 331, aspartate 342, and histidine 424 together coordinate Mn(2+). Residues glutamate 451 and glutamate 475 each contribute to the Mn(2+) site.

This sequence belongs to the peptidase M24B family. As to quaternary structure, homodimer. Isoform 1 interacts with TNFRSF1B/TNFR2 (activated) and TRAF2. Mn(2+) serves as cofactor. Isoform 1 and isoform 2 are widely expressed, with isoform 1 being more abundant.

It is found in the mitochondrion. Its subcellular location is the cytoplasm. The enzyme catalyses Release of any N-terminal amino acid, including proline, that is linked to proline, even from a dipeptide or tripeptide.. Catalyzes the removal of a penultimate prolyl residue from the N-termini of peptides, such as Leu-Pro-Ala. Also shows low activity towards peptides with Ala or Ser at the P1 position. Its function is as follows. Promotes TNFRSF1B-mediated phosphorylation of MAPK8/JNK1 and MAPK9/JNK2, suggesting a function as an adapter protein for TNFRSF1B; the effect is independent of XPNPEP3 peptidase activity. May inhibit apoptotic cell death induced via TNF-TNFRSF1B signaling. This Homo sapiens (Human) protein is Xaa-Pro aminopeptidase 3 (XPNPEP3).